The chain runs to 178 residues: Interleukin-10 (178 aa).

Positions Met1–Ala18 are cleaved as a signal peptide. 2 disulfides stabilise this stretch: Cys30–Cys126 and Cys80–Cys132. Asn134 carries N-linked (GlcNAc...) asparagine glycosylation.

This sequence belongs to the IL-10 family. Homodimer. Interacts with IL10RA and IL10RB. Produced by a variety of cell lines, including T-cells, macrophages, mast cells and other cell types.

It localises to the secreted. Major immune regulatory cytokine that acts on many cells of the immune system where it has profound anti-inflammatory functions, limiting excessive tissue disruption caused by inflammation. Mechanistically, IL10 binds to its heterotetrameric receptor comprising IL10RA and IL10RB leading to JAK1 and STAT2-mediated phosphorylation of STAT3. In turn, STAT3 translocates to the nucleus where it drives expression of anti-inflammatory mediators. Targets antigen-presenting cells (APCs) such as macrophages and monocytes and inhibits their release of pro-inflammatory cytokines including granulocyte-macrophage colony-stimulating factor /GM-CSF, granulocyte colony-stimulating factor/G-CSF, IL-1 alpha, IL-1 beta, IL-6, IL-8 and TNF-alpha. Also interferes with antigen presentation by reducing the expression of MHC-class II and co-stimulatory molecules, thereby inhibiting their ability to induce T cell activation. In addition, controls the inflammatory response of macrophages by reprogramming essential metabolic pathways including mTOR signaling. The sequence is that of Interleukin-10 (IL10) from Homo sapiens (Human).